Here is a 572-residue protein sequence, read N- to C-terminus: MQQVIPAPRVQVTQPYAGQKPGTSGLRKKVSEATQPNYLENFVQSIFNTLRKDELKPKNVLFVGGDGRYFNRQAIFSIIRLAYANDISEVHVGQAGLMSTPASSHYIRKVNEEVGNCIGGIILTASHNPGGKEHGDFGIKFNVRTGAPAPEDFTDQIYTHTTKIKEYLTVDYEFEKHINLDQIGVYKFEGTRLEKSHFEVKVVDTVQDYTQLMQKLFDFDLLKGLFSNKDFSFRFDGMHGVAGPYAKHIFGTLLGCSKESLLNCDPSEDFGGGHPDPNLTYAHDLVELLDIHKKKDVGTVPQFGAACDGDADRNMILGRQFFVTPSDSLAVIAANANLIFKNGLLGAARSMPTSGALDKVAAKNGIKLFETPTGWKFFGNLMDAGLINLCGEESFGTGSNHIREKDGIWAVLAWLTILAHKNKNTDHFVTVEEIVTQYWQQFGRNYYSRYDYEQVDSAGANKMMEHLKTKFQYFEQLKQGNKADIYDYVDPVDQSVSKNQGVRFVFGDGSRIIFRLSGTGSVGATIRIYFEQFEQQQIQHETATALANIIKLGLEISDIAQFTGRNEPTVIT.

Residues Thr23, Arg27, 126–127 (SH), and Lys140 each bind substrate. Ser126 serves as the catalytic Phosphoserine intermediate. Ser126 is a binding site for Mg(2+). Positions 308, 310, and 312 each coordinate Mg(2+). Substrate is bound by residues 312 to 313 (DR), Thr373, 392 to 394 (EES), Lys405, and Arg527.

Belongs to the phosphohexose mutase family. It depends on Mg(2+) as a cofactor. In terms of processing, phosphorylated via a calcium-dependent protein kinase. Very rapidly (within 80 ms) dephosphorylated during triggered trichocyst exocytosis. O-glycosylated with a short chain of mannose residues.

Its subcellular location is the cytoplasm. The catalysed reaction is alpha-D-glucose 1-phosphate = alpha-D-glucose 6-phosphate. Functionally, may be involved in membrane fusion in exocytosis. The polypeptide is Phosphoglucomutase-1 (pp63-1) (Paramecium tetraurelia).